The sequence spans 85 residues: UPF0335 protein Oant_1161 (85 aa).

It belongs to the UPF0335 family.

The sequence is that of UPF0335 protein Oant_1161 from Brucella anthropi (strain ATCC 49188 / DSM 6882 / CCUG 24695 / JCM 21032 / LMG 3331 / NBRC 15819 / NCTC 12168 / Alc 37) (Ochrobactrum anthropi).